Here is a 584-residue protein sequence, read N- to C-terminus: Isocitrate dehydrogenase kinase/phosphatase (584 aa).

Residues 315-321 (APGVKGM) and Lys-336 contribute to the ATP site. The active site involves Asp-371.

The protein belongs to the AceK family.

It localises to the cytoplasm. It carries out the reaction L-seryl-[isocitrate dehydrogenase] + ATP = O-phospho-L-seryl-[isocitrate dehydrogenase] + ADP + H(+). Functionally, bifunctional enzyme which can phosphorylate or dephosphorylate isocitrate dehydrogenase (IDH) on a specific serine residue. This is a regulatory mechanism which enables bacteria to bypass the Krebs cycle via the glyoxylate shunt in response to the source of carbon. When bacteria are grown on glucose, IDH is fully active and unphosphorylated, but when grown on acetate or ethanol, the activity of IDH declines drastically concomitant with its phosphorylation. This chain is Isocitrate dehydrogenase kinase/phosphatase, found in Serratia proteamaculans (strain 568).